The following is a 142-amino-acid chain: MTKENRKRIIAVDYGTKRIGLAKTDPLQLFAQPVGTFSEEALFRAIKEISGLDGIGRILIGYPLNADGSHNRMTDIVDAFAARVHNEFPDIPLELVNEHGSSRSAGQILINSGLSRKKRHEKGRLDSASACVLLQAHLDKSH.

The protein belongs to the YqgF nuclease family.

Its subcellular location is the cytoplasm. Could be a nuclease involved in processing of the 5'-end of pre-16S rRNA. In Prosthecochloris aestuarii (strain DSM 271 / SK 413), this protein is Putative pre-16S rRNA nuclease.